A 218-amino-acid chain; its full sequence is Adenylate kinase (218 aa).

10–15 (GAGKGT) is an ATP binding site. The tract at residues 30-59 (STGDMLRAAVKAGTPLGQQAKAVMDAGQLV) is NMP. Residues threonine 31, arginine 36, 57 to 59 (QLV), 85 to 88 (GFPR), and glutamine 92 each bind AMP. The LID stretch occupies residues 122 to 159 (GRRSHPASGRTYHVKFNPPKVEGQDDVTGEPLVQREDD). ATP contacts are provided by residues arginine 123 and 132 to 133 (TY). The tract at residues 127-151 (PASGRTYHVKFNPPKVEGQDDVTGE) is disordered. Residues arginine 156 and arginine 167 each contribute to the AMP site. Residue glycine 203 coordinates ATP.

Belongs to the adenylate kinase family. In terms of assembly, monomer.

The protein resides in the cytoplasm. The enzyme catalyses AMP + ATP = 2 ADP. It functions in the pathway purine metabolism; AMP biosynthesis via salvage pathway; AMP from ADP: step 1/1. Catalyzes the reversible transfer of the terminal phosphate group between ATP and AMP. Plays an important role in cellular energy homeostasis and in adenine nucleotide metabolism. This chain is Adenylate kinase, found in Delftia acidovorans (strain DSM 14801 / SPH-1).